Consider the following 411-residue polypeptide: Na(+)-translocating NADH-quinone reductase subunit F (411 aa).

A helical membrane pass occupies residues 6-26 (AIGGVAMFTLIIMGLVAIILA). In terms of domain architecture, 2Fe-2S ferredoxin-type spans 35–129 (GDVTIHINDN…DMKIEIDPEF (95 aa)). [2Fe-2S] cluster-binding residues include Cys-72, Cys-78, Cys-81, and Cys-113. Residues 132–273 (VQKWECEVIS…SGPYGEFFAK (142 aa)) form the FAD-binding FR-type domain.

The protein belongs to the NqrF family. Composed of six subunits; NqrA, NqrB, NqrC, NqrD, NqrE and NqrF. Requires [2Fe-2S] cluster as cofactor. It depends on FAD as a cofactor.

It localises to the cell inner membrane. The catalysed reaction is a ubiquinone + n Na(+)(in) + NADH + H(+) = a ubiquinol + n Na(+)(out) + NAD(+). Its function is as follows. NQR complex catalyzes the reduction of ubiquinone-1 to ubiquinol by two successive reactions, coupled with the transport of Na(+) ions from the cytoplasm to the periplasm. The first step is catalyzed by NqrF, which accepts electrons from NADH and reduces ubiquinone-1 to ubisemiquinone by a one-electron transfer pathway. The sequence is that of Na(+)-translocating NADH-quinone reductase subunit F from Psychrobacter cryohalolentis (strain ATCC BAA-1226 / DSM 17306 / VKM B-2378 / K5).